The primary structure comprises 127 residues: Protein ApaG (127 aa).

One can recognise an ApaG domain in the interval 3 to 127 (KDKRYAFSVK…FQLNMPRVLH (125 aa)).

This is Protein ApaG from Methylobacillus flagellatus (strain ATCC 51484 / DSM 6875 / VKM B-1610 / KT).